Here is a 288-residue protein sequence, read N- to C-terminus: Capsid protein (288 aa).

The residue at position 2 (A2) is an N-acetylalanine; by host.

It belongs to the high plain virus capsid family.

It localises to the virion. This is Capsid protein from High plains virus (isolate Kansas 2004).